The chain runs to 718 residues: Methionine--tRNA ligase (718 aa).

Residues 12–22 carry the 'HIGH' region motif; sequence PYANGDIHLGH. The Zn(2+) site is built by Cys-143, Cys-146, Cys-156, and Cys-159. A 'KMSKS' region motif is present at residues 349–353; the sequence is KMSKS. Residue Lys-352 participates in ATP binding. Residues 573 to 599 are disordered; the sequence is AAPAAKVASSQQRHAEKQQHEAQSAET. Residues 608–718 form the tRNA-binding domain; it reads DFTKVDLRIA…TGAASGMRVK (111 aa).

It belongs to the class-I aminoacyl-tRNA synthetase family. MetG type 1 subfamily. In terms of assembly, homodimer. Zn(2+) serves as cofactor.

It is found in the cytoplasm. It catalyses the reaction tRNA(Met) + L-methionine + ATP = L-methionyl-tRNA(Met) + AMP + diphosphate. Its function is as follows. Is required not only for elongation of protein synthesis but also for the initiation of all mRNA translation through initiator tRNA(fMet) aminoacylation. The chain is Methionine--tRNA ligase from Aromatoleum aromaticum (strain DSM 19018 / LMG 30748 / EbN1) (Azoarcus sp. (strain EbN1)).